The primary structure comprises 494 residues: Aspartyl/glutamyl-tRNA(Asn/Gln) amidotransferase subunit B (494 aa).

This sequence belongs to the GatB/GatE family. GatB subfamily. In terms of assembly, heterotrimer of A, B and C subunits.

The enzyme catalyses L-glutamyl-tRNA(Gln) + L-glutamine + ATP + H2O = L-glutaminyl-tRNA(Gln) + L-glutamate + ADP + phosphate + H(+). It carries out the reaction L-aspartyl-tRNA(Asn) + L-glutamine + ATP + H2O = L-asparaginyl-tRNA(Asn) + L-glutamate + ADP + phosphate + 2 H(+). Functionally, allows the formation of correctly charged Asn-tRNA(Asn) or Gln-tRNA(Gln) through the transamidation of misacylated Asp-tRNA(Asn) or Glu-tRNA(Gln) in organisms which lack either or both of asparaginyl-tRNA or glutaminyl-tRNA synthetases. The reaction takes place in the presence of glutamine and ATP through an activated phospho-Asp-tRNA(Asn) or phospho-Glu-tRNA(Gln). This Rhizorhabdus wittichii (strain DSM 6014 / CCUG 31198 / JCM 15750 / NBRC 105917 / EY 4224 / RW1) (Sphingomonas wittichii) protein is Aspartyl/glutamyl-tRNA(Asn/Gln) amidotransferase subunit B.